Here is a 332-residue protein sequence, read N- to C-terminus: tRNA-dihydrouridine synthase B (332 aa).

Residues 16–18 and glutamine 70 each bind FMN; that span reads PMA. The active-site Proton donor is the cysteine 100. FMN-binding positions include lysine 139, 200-202, and 224-225; these read NGD and GR.

This sequence belongs to the Dus family. DusB subfamily. It depends on FMN as a cofactor.

The enzyme catalyses a 5,6-dihydrouridine in tRNA + NAD(+) = a uridine in tRNA + NADH + H(+). The catalysed reaction is a 5,6-dihydrouridine in tRNA + NADP(+) = a uridine in tRNA + NADPH + H(+). In terms of biological role, catalyzes the synthesis of 5,6-dihydrouridine (D), a modified base found in the D-loop of most tRNAs, via the reduction of the C5-C6 double bond in target uridines. The protein is tRNA-dihydrouridine synthase B of Xanthomonas campestris pv. campestris (strain ATCC 33913 / DSM 3586 / NCPPB 528 / LMG 568 / P 25).